An 839-amino-acid polypeptide reads, in one-letter code: V-type proton ATPase 116 kDa subunit a 1 (839 aa).

Residues 1-395 (MGELFRSEEM…DAYGIGTYRE (395 aa)) are Cytoplasmic-facing. 2 positions are modified to phosphothreonine: T257 and T367. Y371 is subject to Phosphotyrosine. The chain crosses the membrane as a helical span at residues 396–414 (INPAPYTVITFPFLFAVMF). The Vacuolar portion of the chain corresponds to 415 to 416 (GD). Residues 417–433 (FGHGILMTLFAVWMVLR) form a helical membrane-spanning segment. Over 434–448 (ESRILSQKHENEMFS) the chain is Cytoplasmic. Residues 449 to 478 (MVFSGRYIILLMGLFSIYTGLIYNDCFSKS) form a helical membrane-spanning segment. The Vacuolar portion of the chain corresponds to 479-542 (LNIFGSSWSV…ATNKLTFLNS (64 aa)). Residues 543 to 562 (FKMKMSVILGIIHMLFGVSL) traverse the membrane as a helical segment. The Cytoplasmic segment spans residues 563–580 (SLFNHIYFKKPLNIYFGF). Residues 581-601 (IPEIIFMSSLFGYLVILIFYK) traverse the membrane as a helical segment. The Vacuolar portion of the chain corresponds to 602 to 646 (WTAYDAHSSRNAPSLLIHFINMFLFSYPESGNAMLYSGQKGIQCF). The chain crosses the membrane as a helical span at residues 647–666 (LIVVAMLCVPWMLLFKPLIL). Over 667-726 (RHQYLRKKHLGTLNFGGIRVGNGPTEEDAEIIQHDQLSTHSEDAEEFDFGDTMVHQAIHT) the chain is Cytoplasmic. Residues 727–751 (IEYCLGCISNTASYLRLWALSLAHA) form a helical membrane-spanning segment. Residues 752–772 (QLSEVLWTMVIHIGLHVRSLA) lie on the Vacuolar side of the membrane. The helical transmembrane segment at 773-811 (GGLGLFFIFAAFATLTVAILLIMEGLSAFLHALRLHWVE) threads the bilayer. The Cytoplasmic segment spans residues 812-839 (FQNKFYTGTGFKFLPFSFEHIREGKFDE).

The protein belongs to the V-ATPase 116 kDa subunit family. As to quaternary structure, V-ATPase is a heteromultimeric enzyme made up of two complexes: the ATP-hydrolytic V1 complex and the proton translocation V0 complex. The V1 complex consists of three catalytic AB heterodimers that form a heterohexamer, three peripheral stalks each consisting of EG heterodimers, one central rotor including subunits D and F, and the regulatory subunits C and H. The proton translocation complex V0 consists of the proton transport subunit a, a ring of proteolipid subunits c9c'', rotary subunit d, subunits e and f, and the accessory subunits ATP6AP1/Ac45 and ATP6AP2/PRR. Interacts with SPAAR. In terms of tissue distribution, predominantly expressed in neurons in the cortex and in the dentate gyrus, CA1 and CA3 regions of the hippocampus (at protein level). Expressed at lower levels in astrocytes, oligodendrocytes and microglia (at protein level). In the cerebellum, present in Purkinje and granule cells (at protein level).

It localises to the cytoplasmic vesicle. It is found in the clathrin-coated vesicle membrane. The protein localises to the secretory vesicle. The protein resides in the synaptic vesicle membrane. Its subcellular location is the melanosome. Subunit of the V0 complex of vacuolar(H+)-ATPase (V-ATPase), a multisubunit enzyme composed of a peripheral complex (V1) that hydrolyzes ATP and a membrane integral complex (V0) that translocates protons. V-ATPase is responsible for the acidification of various organelles, such as lysosomes, endosomes, the trans-Golgi network, and secretory granules, including synaptic vesicles. In certain cell types, can be exported to the plasma membrane, where it is involved in the acidification of the extracellular environment. Required for assembly and activity of the vacuolar ATPase. Through its action on compartment acidification, plays an essential role in neuronal development in terms of integrity and connectivity of neurons. This is V-type proton ATPase 116 kDa subunit a 1 (Atp6v0a1) from Mus musculus (Mouse).